The sequence spans 161 residues: Nucleotide-binding protein azo2183 (161 aa).

This sequence belongs to the YajQ family.

Nucleotide-binding protein. This chain is Nucleotide-binding protein azo2183, found in Azoarcus sp. (strain BH72).